Reading from the N-terminus, the 211-residue chain is Probable septum site-determining protein MinC (211 aa).

This sequence belongs to the MinC family. As to quaternary structure, interacts with MinD and FtsZ.

Its function is as follows. Cell division inhibitor that blocks the formation of polar Z ring septums. Rapidly oscillates between the poles of the cell to destabilize FtsZ filaments that have formed before they mature into polar Z rings. Prevents FtsZ polymerization. The sequence is that of Probable septum site-determining protein MinC from Clostridium acetobutylicum (strain ATCC 824 / DSM 792 / JCM 1419 / IAM 19013 / LMG 5710 / NBRC 13948 / NRRL B-527 / VKM B-1787 / 2291 / W).